The chain runs to 375 residues: Actin (375 aa).

Belongs to the actin family.

It localises to the cytoplasm. The protein localises to the cytoskeleton. The catalysed reaction is ATP + H2O = ADP + phosphate + H(+). Actins are highly conserved proteins that are involved in various types of cell motility and are ubiquitously expressed in all eukaryotic cells. This is Actin from Sterkiella cavicola (Ciliate).